Here is a 117-residue protein sequence, read N- to C-terminus: uncharacterized protein (117 aa).

Transmembrane regions (helical) follow at residues Ala-3–Leu-23, Phe-40–Ala-60, Leu-66–Ala-86, and Pro-94–Ala-114.

It to E.coli and S.aureus ethidium bromide resistance proteins (ebr/QacC/EmrE/MvrC).

It localises to the cell membrane. This is an uncharacterized protein from Sinorhizobium fredii (strain NBRC 101917 / NGR234).